The primary structure comprises 305 residues: T-cell immunoglobulin and mucin domain-containing protein 2 (305 aa).

Positions 1-21 (MNQIQVFISGLILLLPGAVES) are cleaved as a signal peptide. Residues 22 to 125 (HTAVQGLAGH…AFHFVDYMLE (104 aa)) form the Ig-like V-type domain. Residues 22–231 (HTAVQGLAGH…QKPQKNLNKG (210 aa)) lie on the Extracellular side of the membrane. 3 cysteine pairs are disulfide-bonded: Cys37–Cys109, Cys50–Cys61, and Cys56–Cys108. N-linked (GlcNAc...) asparagine glycans are attached at residues Asn86 and Asn91. Residues 130-174 (ISTSPPTRPTATGRPTTISTRSTHVPTSTRVSTSTSPTPAHTETY) form a disordered region. Over residues 131–167 (STSPPTRPTATGRPTTISTRSTHVPTSTRVSTSTSPT) the composition is skewed to low complexity. Residues 232–252 (FYVGISIAALLILMLLSTMVI) traverse the membrane as a helical segment. Residues 253-305 (TRYVVMKRKSESLSFVAFPISKIGASPKKVVERTRCEDQVYIIEDTPYPEEES) are Cytoplasmic-facing.

It belongs to the immunoglobulin superfamily. TIM family. Homodimer. As to expression, expressed on late differentiated Th2 cells. Expressed also on all splenic B-cells, with increased levels on germinal center B-cells, in the liver, especially in bile duct epithelial cells, and in renal tubule cells. Within retina, mainly expressed in Mueller cells.

It is found in the cell membrane. Cell surface glycoprotein that participates in iron homeostasis in the liver, the kidney, the retina and oligodendrocytes by acting as a receptor of H-ferritin. Mechanistically, mediates iron-containing ferritin uptake via an endocytic pathway, trafficking to endosomes and subsequently to lysosomes. Plays also an important role in the regulation of Th2 immunity. Receptor for SEMA4A involved in the regulation of T-cell function, enhancing T-cell activation. This Mus musculus (Mouse) protein is T-cell immunoglobulin and mucin domain-containing protein 2 (Timd2).